Reading from the N-terminus, the 104-residue chain is L-rhamnose mutarotase (104 aa).

Tyr-18 is a substrate binding site. The Proton donor role is filled by His-22. Substrate-binding positions include Tyr-41 and 76–77 (WW).

It belongs to the rhamnose mutarotase family. In terms of assembly, homodimer.

It is found in the cytoplasm. It carries out the reaction alpha-L-rhamnose = beta-L-rhamnose. Its pathway is carbohydrate metabolism; L-rhamnose metabolism. Its function is as follows. Involved in the anomeric conversion of L-rhamnose. This is L-rhamnose mutarotase from Klebsiella pneumoniae subsp. pneumoniae (strain ATCC 700721 / MGH 78578).